The following is a 782-amino-acid chain: E3 UFM1-protein ligase 1 homolog (782 aa).

A disordered region spans residues Val405 to Lys478.

Belongs to the UFL1 family.

Its function is as follows. E3 UFM1-protein ligase that mediates ufmylation of target proteins. The sequence is that of E3 UFM1-protein ligase 1 homolog from Drosophila simulans (Fruit fly).